The following is a 336-amino-acid chain: Iron-uptake system permease protein FeuC (336 aa).

9 helical membrane passes run Leu-7 to Val-27, Val-57 to Ile-77, Pro-85 to Phe-105, Met-120 to Trp-140, Ile-150 to Leu-170, Ala-191 to Ile-211, Val-246 to Ala-266, Tyr-280 to Gly-300, and Glu-308 to Phe-328.

The protein belongs to the binding-protein-dependent transport system permease family. FecCD subfamily. In terms of assembly, the complex is composed of one ATP-binding protein (YusV), two transmembrane proteins (FeuB and FeuC) and a solute-binding protein (FeuA).

The protein localises to the cell membrane. Involved in the uptake of iron. Probably responsible for the translocation of the substrate across the membrane. Functionally, part of the ABC transporter complex FeuABC/YusV involved in import of the catecholate siderophores bacillibactin and enterobactin. This chain is Iron-uptake system permease protein FeuC (feuC), found in Bacillus subtilis (strain 168).